Here is a 101-residue protein sequence, read N- to C-terminus: Phosphoribosyl-AMP cyclohydrolase (101 aa).

Asp71 serves as a coordination point for Mg(2+). Cys72 is a binding site for Zn(2+). Mg(2+) contacts are provided by Asp73 and Asp75. The Zn(2+) site is built by Cys88 and Cys95.

This sequence belongs to the PRA-CH family. Homodimer. Mg(2+) is required as a cofactor. The cofactor is Zn(2+).

Its subcellular location is the cytoplasm. It carries out the reaction 1-(5-phospho-beta-D-ribosyl)-5'-AMP + H2O = 1-(5-phospho-beta-D-ribosyl)-5-[(5-phospho-beta-D-ribosylamino)methylideneamino]imidazole-4-carboxamide. It participates in amino-acid biosynthesis; L-histidine biosynthesis; L-histidine from 5-phospho-alpha-D-ribose 1-diphosphate: step 3/9. In terms of biological role, catalyzes the hydrolysis of the adenine ring of phosphoribosyl-AMP. This is Phosphoribosyl-AMP cyclohydrolase from Bacillus cereus (strain 03BB102).